Reading from the N-terminus, the 950-residue chain is Translation initiation factor IF-2 (950 aa).

4 stretches are compositionally biased toward basic and acidic residues: residues K128 to A158, A165 to K186, K200 to R234, and N291 to R312. Positions K128–T354 are disordered. Polar residues-rich tracts occupy residues N322–Q336 and Y343–A353. In terms of domain architecture, tr-type G spans E448 to K619. Residues G457–T464 form a G1 region. Position 457–464 (G457–T464) interacts with GTP. The segment at G482–H486 is G2. Positions D503–G506 are G3. GTP contacts are provided by residues D503–H507 and N557–D560. A G4 region spans residues N557–D560. Residues S595–K597 form a G5 region.

The protein belongs to the TRAFAC class translation factor GTPase superfamily. Classic translation factor GTPase family. IF-2 subfamily.

It is found in the cytoplasm. One of the essential components for the initiation of protein synthesis. Protects formylmethionyl-tRNA from spontaneous hydrolysis and promotes its binding to the 30S ribosomal subunits. Also involved in the hydrolysis of GTP during the formation of the 70S ribosomal complex. This is Translation initiation factor IF-2 from Lactococcus lactis subsp. cremoris (strain MG1363).